We begin with the raw amino-acid sequence, 474 residues long: GTPase Der (474 aa).

2 EngA-type G domains span residues Leu-2 to Glu-166 and Leu-212 to Ser-385. Residues Gly-8–Ser-15, Asp-55–Val-59, Asn-118–Asp-121, Gly-218–Ser-225, Asp-265–Leu-269, and Asn-330–Asp-333 each bind GTP. Positions Ser-386–Thr-470 constitute a KH-like domain.

It belongs to the TRAFAC class TrmE-Era-EngA-EngB-Septin-like GTPase superfamily. EngA (Der) GTPase family. In terms of assembly, associates with the 50S ribosomal subunit.

In terms of biological role, GTPase that plays an essential role in the late steps of ribosome biogenesis. The chain is GTPase Der from Chlamydia abortus (strain DSM 27085 / S26/3) (Chlamydophila abortus).